Reading from the N-terminus, the 266-residue chain is Glucosamine-6-phosphate deaminase 1 (266 aa).

The active-site Proton acceptor; for enolization step is the Asp67. Catalysis depends on Asn136, which acts as the For ring-opening step. The Proton acceptor; for ring-opening step role is filled by His138. Glu143 functions as the For ring-opening step in the catalytic mechanism.

The protein belongs to the glucosamine/galactosamine-6-phosphate isomerase family. In terms of assembly, homohexamer.

It is found in the cytoplasm. It carries out the reaction alpha-D-glucosamine 6-phosphate + H2O = beta-D-fructose 6-phosphate + NH4(+). Its function is as follows. Catalyzes the reversible conversion of alpha-D-glucosamine 6-phosphate (GlcN-6P) into beta-D-fructose 6-phosphate (Fru-6P) and ammonium ion, a regulatory reaction step in de novo uridine diphosphate-N-acetyl-alpha-D-glucosamine (UDP-GlcNAc) biosynthesis via hexosamine pathway. The protein is Glucosamine-6-phosphate deaminase 1 (GPI1) of Giardia intestinalis (Giardia lamblia).